The chain runs to 502 residues: Actin-binding protein WASF3 (502 aa).

Positions 57–93 (NEANNFYIRANSLQDRIDRLAVKVTQLDSTVEEVSLQ) form a coiled coil. The residue at position 151 (Tyr151) is a Phosphotyrosine; by ABL1. A coiled-coil region spans residues 162–206 (KEKMLQDTEDKRKEKRRQKEQKRIDGTTREVKKVRKARNRRQEWN). Disordered stretches follow at residues 169–210 (TEDK…MMAY) and 223–443 (SVYH…ARSD). Residues 182-192 (QKRIDGTTREV) are compositionally biased toward basic and acidic residues. Residues 223 to 237 (SVYHGASSEGSLSPD) show a composition bias toward polar residues. Tyr248 is subject to Phosphotyrosine; by ABL1. Pro residues predominate over residues 302-312 (QQPPPPPPPQA). Tyr337 carries the post-translational modification Phosphotyrosine; by ABL1. 2 stretches are compositionally biased toward pro residues: residues 341–352 (SGPPPPPPPPVI) and 394–410 (APPPPGPPPPPPGPPGP). Over residues 411-423 (GSSLSSSPMHGPP) the composition is skewed to low complexity. Residues 440-457 (ARSDLLAAIRMGIQLKKV) form the WH2 domain. Tyr486 bears the Phosphotyrosine; by ABL1 mark.

It belongs to the SCAR/WAVE family. In terms of assembly, binds actin and the Arp2/3 complex. Phosphorylation by ABL1 promotes lamellipodia formation and cell migration. As to expression, expressed in ovary and brain.

The protein localises to the cytoplasm. The protein resides in the cytoskeleton. In terms of biological role, downstream effector molecules involved in the transmission of signals from tyrosine kinase receptors and small GTPases to the actin cytoskeleton. Plays a role in the regulation of cell morphology and cytoskeletal organization. Required in the control of cell shape. The chain is Actin-binding protein WASF3 (WASF3) from Homo sapiens (Human).